We begin with the raw amino-acid sequence, 102 residues long: Phosphoribosyl-ATP pyrophosphatase (102 aa).

This sequence belongs to the PRA-PH family.

It is found in the cytoplasm. The enzyme catalyses 1-(5-phospho-beta-D-ribosyl)-ATP + H2O = 1-(5-phospho-beta-D-ribosyl)-5'-AMP + diphosphate + H(+). The protein operates within amino-acid biosynthesis; L-histidine biosynthesis; L-histidine from 5-phospho-alpha-D-ribose 1-diphosphate: step 2/9. The polypeptide is Phosphoribosyl-ATP pyrophosphatase (Ignicoccus hospitalis (strain KIN4/I / DSM 18386 / JCM 14125)).